The following is a 371-amino-acid chain: Cytochrome b (371 aa).

4 helical membrane-spanning segments follow: residues 25–45 (FGSMLLTCLMLQVLTGFFLAV), 69–90 (WLMQNLHAIGASMFFICIYIHI), 105–125 (WMSGITLLITLIATAFFGYVL), and 170–190 (FFALHFILPFAIISLSSLHII). Residues H75 and H89 each coordinate heme b. Residues H174 and H188 each contribute to the heme b site. Position 193 (H193) interacts with a ubiquinone. The next 4 helical transmembrane spans lie at 218-238 (YKDLLLLTLMLLTLMITVSFF), 280-300 (LGGALALVMSIMILLTAPLTH), 312-332 (LSQLMFWTLISTFITITWAAT), and 339-358 (YIIISQTTATLYFTFFISTP).

This sequence belongs to the cytochrome b family. As to quaternary structure, the cytochrome bc1 complex contains 3 respiratory subunits (MT-CYB, CYC1 and UQCRFS1), 2 core proteins (UQCRC1 and UQCRC2) and probably 6 low-molecular weight proteins. Heme b is required as a cofactor.

The protein localises to the mitochondrion inner membrane. Functionally, component of the ubiquinol-cytochrome c reductase complex (complex III or cytochrome b-c1 complex) that is part of the mitochondrial respiratory chain. The b-c1 complex mediates electron transfer from ubiquinol to cytochrome c. Contributes to the generation of a proton gradient across the mitochondrial membrane that is then used for ATP synthesis. The sequence is that of Cytochrome b (MT-CYB) from Python regius (Ball python).